The chain runs to 193 residues: Oocyte-secreted protein 3 (193 aa).

The first 22 residues, 1 to 22 (MKDFVRLQSSFLLCTILTLSEQ), serve as a signal peptide directing secretion. N-linked (GlcNAc...) asparagine glycans are attached at residues Asn64, Asn130, Asn148, Asn151, Asn165, and Asn178.

It belongs to the PLAC1 family.

It localises to the secreted. This Homo sapiens (Human) protein is Oocyte-secreted protein 3.